Consider the following 342-residue polypeptide: Isopentenyl-diphosphate delta-isomerase (342 aa).

Substrate is bound at residue 11 to 12; the sequence is RK. FMN contacts are provided by residues Ser-68, 69-71, Ser-99, and Asn-128; that span reads SMT. Residue 99–101 coordinates substrate; it reads SQR. Gln-162 is a binding site for substrate. Glu-163 is a Mg(2+) binding site. FMN-binding positions include Lys-194, Ser-219, Thr-224, 275-277, and 296-297; these read GVR and AK.

The protein belongs to the IPP isomerase type 2 family. In terms of assembly, homooctamer. Dimer of tetramers. FMN is required as a cofactor. Requires NADPH as cofactor. Mg(2+) serves as cofactor.

It is found in the cytoplasm. It catalyses the reaction isopentenyl diphosphate = dimethylallyl diphosphate. In terms of biological role, involved in the biosynthesis of isoprenoids. Catalyzes the 1,3-allylic rearrangement of the homoallylic substrate isopentenyl (IPP) to its allylic isomer, dimethylallyl diphosphate (DMAPP). The sequence is that of Isopentenyl-diphosphate delta-isomerase from Legionella pneumophila subsp. pneumophila (strain Philadelphia 1 / ATCC 33152 / DSM 7513).